The primary structure comprises 196 residues: FMN-dependent NADH:quinone oxidoreductase (196 aa).

FMN contacts are provided by residues serine 10, serine 16–serine 18, methionine 93–phenylalanine 96, and threonine 137–glycine 140.

This sequence belongs to the azoreductase type 1 family. In terms of assembly, homodimer. FMN is required as a cofactor.

It catalyses the reaction 2 a quinone + NADH + H(+) = 2 a 1,4-benzosemiquinone + NAD(+). It carries out the reaction N,N-dimethyl-1,4-phenylenediamine + anthranilate + 2 NAD(+) = 2-(4-dimethylaminophenyl)diazenylbenzoate + 2 NADH + 2 H(+). In terms of biological role, quinone reductase that provides resistance to thiol-specific stress caused by electrophilic quinones. Also exhibits azoreductase activity. Catalyzes the reductive cleavage of the azo bond in aromatic azo compounds to the corresponding amines. This chain is FMN-dependent NADH:quinone oxidoreductase, found in Shewanella amazonensis (strain ATCC BAA-1098 / SB2B).